The following is a 504-amino-acid chain: Pyruvate kinase (504 aa).

Substrate is bound at residue R53. N55, S57, D88, and T89 together coordinate K(+). 55 to 58 (NFSH) is an ATP binding site. ATP is bound by residues R95 and K181. Mg(2+) is bound at residue E246. Residues G269, D270, and T302 each contribute to the substrate site. D270 contributes to the Mg(2+) binding site.

This sequence belongs to the pyruvate kinase family. As to quaternary structure, homotetramer. Mg(2+) is required as a cofactor. The cofactor is K(+).

The enzyme catalyses pyruvate + ATP = phosphoenolpyruvate + ADP + H(+). It functions in the pathway carbohydrate degradation; glycolysis; pyruvate from D-glyceraldehyde 3-phosphate: step 5/5. This chain is Pyruvate kinase (PYK1), found in Debaryomyces hansenii (strain ATCC 36239 / CBS 767 / BCRC 21394 / JCM 1990 / NBRC 0083 / IGC 2968) (Yeast).